The sequence spans 604 residues: MKQAKKQGVLERFYYSSDEIIEKPFNWAQMWRLLSYVKPYRKTILPLSFLTVLIGTAVKLVIPILIGVYVLDQAITGRNSELLIQLIFIISGLYVLNYAANVLRIRWMNQLGQHVIYDLRQHLFTHVQRLSHRFFDQRSAGSILVRIMNDINSLQELFTSGVINLLTDLLLLAGVIIILFTLSPELTIAIMVTLPIMFFISTSLRKKIRRSWQTVRLKQSKLNSHLNESIQGIRVTQAFTQEEENMAYFDGVNQENYESWREATRKNAMFRPLVEMTNAIGTAVLIWYGATLIMNETITIGVFVSFAFYLGMFWEPISRLGQVYNQLLMGMASSERIFEFLDEQPNVKEKPNAIHNEKINGEISFEEVEFSYDEKRKALHAVSFSIPAGSTLALVGHTGSGKTTIANLISRFYDAAGGTIKIDGIPIKDLSLASLRSQISIVLQDTFIFSGTIMENIRFGRPNASDEEVMKASQAVGADEFISDLAEGYATEVEERGSVLSAGQRQLISFARALLADPAIIILDEATASIDTETEVKIQQALKTLLKGRTAVMIAHRLSTIRDADRIIVLDHGRKIEEGNHDQLLAKGGIYAGLVKAQYSTAIE.

Positions 45-329 (LPLSFLTVLI…LGQVYNQLLM (285 aa)) constitute an ABC transmembrane type-1 domain. The next 6 helical transmembrane spans lie at 49–69 (FLTV…IGVY), 82–102 (LLIQ…AANV), 162–182 (VINL…LFTL), 184–204 (PELT…STSL), 273–293 (LVEM…ATLI), and 297–317 (TITI…WEPI). In terms of domain architecture, ABC transporter spans 363 to 597 (ISFEEVEFSY…GGIYAGLVKA (235 aa)). 396-403 (GHTGSGKT) is an ATP binding site.

Belongs to the ABC transporter superfamily.

Its subcellular location is the cell membrane. This is an uncharacterized protein from Bacillus subtilis (strain 168).